The primary structure comprises 128 residues: RxLR effector protein SFI2 (128 aa).

A signal peptide spans 1-22 (MRSAFYIFLVVAVLARCSVVAA). Residues 52–71 (RLLRVAGREDDDATTDEEDR) carry the RxLR-dEER motif.

The protein belongs to the RxLR effector family.

It is found in the secreted. The protein localises to the host nucleus. In terms of biological role, effector that suppresses flg22-induced post-translational MAP kinase activation both tomato and Arabidopsis. The perception of highly conserved pathogen- or microbe-associated molecular patterns (PAMPs/MAMPs), such as flg22, triggers converging signaling pathways recruiting MAP kinase cascades and inducing transcriptional re-programming, yielding a generic antimicrobial response. In Phytophthora infestans (strain T30-4) (Potato late blight agent), this protein is RxLR effector protein SFI2.